Consider the following 175-residue polypeptide: Nicotinamide-nucleotide adenylyltransferase 1 (175 aa).

It belongs to the archaeal NMN adenylyltransferase family.

It is found in the cytoplasm. It catalyses the reaction beta-nicotinamide D-ribonucleotide + ATP + H(+) = diphosphate + NAD(+). It participates in cofactor biosynthesis; NAD(+) biosynthesis; NAD(+) from nicotinamide D-ribonucleotide: step 1/1. The polypeptide is Nicotinamide-nucleotide adenylyltransferase 1 (Sulfolobus acidocaldarius (strain ATCC 33909 / DSM 639 / JCM 8929 / NBRC 15157 / NCIMB 11770)).